The following is a 265-amino-acid chain: Major pollen allergen Hol l 1 (265 aa).

The first 25 residues, 1–25 (MASSSRSVLLLVAALFAVFLGSAHG), serve as a signal peptide directing secretion. A glycan (N-linked (GlcNAc...) asparagine) is linked at Asn-34. Residues 63–169 (GGACGYKDVD…RRVKCKYPDG (107 aa)) form the Expansin-like EG45 domain. Residues 183-264 (NYLALLVKYI…GWKADTAYEA (82 aa)) enclose the Expansin-like CBD domain.

It belongs to the expansin family. Expansin B subfamily.

It is found in the secreted. The chain is Major pollen allergen Hol l 1 from Holcus lanatus (Yorkshire-fog).